The following is a 688-amino-acid chain: NADH-ubiquinone oxidoreductase 75 kDa subunit (688 aa).

The 85-residue stretch at 1–85 folds into the 2Fe-2S ferredoxin-type domain; sequence MIIRFKINEI…DESIETEIDE (85 aa). [2Fe-2S] cluster contacts are provided by Cys-38, Cys-49, Cys-52, and Cys-66. Residues 85–124 enclose the 4Fe-4S His(Cys)3-ligated-type domain; sequence EILKAREGVMEFLLINHPLDCPICDQGGECDLQEQTLAYG. The [4Fe-4S] cluster site is built by His-101, Cys-105, Cys-108, Cys-114, Cys-153, Cys-156, Cys-159, and Cys-204. The 4Fe-4S Mo/W bis-MGD-type domain maps to 223-279; that stretch reads LKNIKGIDIFDTLLTPINYQVKGGEIFRILPRINDRINEEWITDKVRFHYESYKIIE.

This sequence belongs to the complex I 75 kDa subunit family. In terms of assembly, complex I is composed of about 45 different subunits. [2Fe-2S] cluster serves as cofactor. The cofactor is [4Fe-4S] cluster.

It localises to the mitochondrion inner membrane. The catalysed reaction is a ubiquinone + NADH + 5 H(+)(in) = a ubiquinol + NAD(+) + 4 H(+)(out). Functionally, core subunit of the mitochondrial membrane respiratory chain NADH dehydrogenase (Complex I) that is believed to belong to the minimal assembly required for catalysis. Complex I functions in the transfer of electrons from NADH to the respiratory chain. The immediate electron acceptor for the enzyme is believed to be ubiquinone. This is the largest subunit of complex I and it is a component of the iron-sulfur (IP) fragment of the enzyme. It may form part of the active site crevice where NADH is oxidized. The chain is NADH-ubiquinone oxidoreductase 75 kDa subunit (nad11) from Dictyostelium discoideum (Social amoeba).